The following is a 514-amino-acid chain: Maturase K (514 aa).

This sequence belongs to the intron maturase 2 family. MatK subfamily.

It localises to the plastid. Its subcellular location is the chloroplast. In terms of biological role, usually encoded in the trnK tRNA gene intron. Probably assists in splicing its own and other chloroplast group II introns. The sequence is that of Maturase K from Erythronium grandiflorum (Yellow avalanche-lily).